The chain runs to 561 residues: Mercuric reductase (561 aa).

Residues 1–65 (MTTLKITGMT…AVAGLGYEAT (65 aa)) enclose the HMA domain. Residues C11 and C14 each contribute to the a metal cation site. Residues A110, G130, and T135 each contribute to the FAD site. C136 and C141 are disulfide-bonded. 4 residues coordinate FAD: K145, A211, D403, and V411. Residues C558 and C559 each contribute to the Hg(2+) site.

The protein belongs to the class-I pyridine nucleotide-disulfide oxidoreductase family. Homodimer. The cofactor is FAD.

It carries out the reaction Hg + NADP(+) + H(+) = Hg(2+) + NADPH. Functionally, resistance to Hg(2+) in bacteria appears to be governed by a specialized system which includes mercuric reductase. MerA protein is responsible for volatilizing mercury as Hg(0). The protein is Mercuric reductase (merA) of Enterobacter agglomerans (Erwinia herbicola).